Consider the following 621-residue polypeptide: Polycystin-2-like protein 2 (621 aa).

At 1–31 (MSEATWWYRGGTSKHDLHYRREAEVNTTLEE) the chain is on the cytoplasmic side. Residues 32-52 (LLLYFIFLINLCILTFGMVNP) traverse the membrane as a helical segment. The Extracellular portion of the chain corresponds to 53-277 (HMYYLNKVMS…SVKLLRYVSY (225 aa)). N-linked (GlcNAc...) asparagine glycans are attached at residues N115 and N138. Residues 278-298 (YDYFIASCEVIFCIFLFVFII) form a helical membrane-spanning segment. Topologically, residues 299–314 (QELRKVNEFKSAYFRS) are cytoplasmic. The helical transmembrane segment at 315–335 (VWNWLEMLLLLLCFLAVSFYA) threads the bilayer. The Extracellular segment spans residues 336–360 (YCNMQSFLLLGQLLKNTDSYPDFYF). Residues 361 to 381 (LAYWHIYYNNVIAITIFFAWI) traverse the membrane as a helical segment. The Cytoplasmic portion of the chain corresponds to 382–406 (KIFKFISFNETMSQLSSTLSRCMKD). A helical membrane pass occupies residues 407–427 (IVGFAIMFFIIFSAYAQLGFL). Over 428–468 (VFGSQVDDFSTFQNSIFAQFRIVLGDFNFAGIQQANWILGP) the chain is Extracellular. A helical membrane pass occupies residues 469 to 489 (IYFITFIFFVFFVLLNMFLAI). Residues 490 to 621 (INDTYSEVKA…KLNQLMRKLH (132 aa)) are Cytoplasmic-facing. Positions 521–551 (NVLEKLRLKKAQAKEEKKMQTTDLAQRARRD) form a coiled coil.

It belongs to the polycystin family. Interacts with TRPC1 and TRPC5. As to expression, expressed only in testis and heart.

It localises to the membrane. In terms of biological role, exhibits a lower single conductance but no spontaneous channel activity. May function as a regulator of calcium channels or a channel component involving Ca2(+) homeostasis. The polypeptide is Polycystin-2-like protein 2 (Mus musculus (Mouse)).